The sequence spans 286 residues: Shikimate dehydrogenase (NADP(+)) (286 aa).

Residues 22–24 (SRS) and threonine 71 each bind shikimate. Residue lysine 75 is the Proton acceptor of the active site. An NADP(+)-binding site is contributed by glutamate 87. Asparagine 96 and aspartate 111 together coordinate shikimate. Residues 136-140 (GAGGA), 160-165 (NRTPER), and isoleucine 225 each bind NADP(+). Tyrosine 227 contacts shikimate. Residue glycine 248 coordinates NADP(+).

It belongs to the shikimate dehydrogenase family. As to quaternary structure, homodimer.

The catalysed reaction is shikimate + NADP(+) = 3-dehydroshikimate + NADPH + H(+). It functions in the pathway metabolic intermediate biosynthesis; chorismate biosynthesis; chorismate from D-erythrose 4-phosphate and phosphoenolpyruvate: step 4/7. Functionally, involved in the biosynthesis of the chorismate, which leads to the biosynthesis of aromatic amino acids. Catalyzes the reversible NADPH linked reduction of 3-dehydroshikimate (DHSA) to yield shikimate (SA). The sequence is that of Shikimate dehydrogenase (NADP(+)) from Sinorhizobium medicae (strain WSM419) (Ensifer medicae).